Consider the following 570-residue polypeptide: Nucleoprotein (570 aa).

Positions methionine 54 to valine 241 are binding site for the cap structure m7GTP. The disordered stretch occupies residues isoleucine 342–glycine 361. The Mn(2+) site is built by aspartate 390 and glutamate 392. Zn(2+)-binding residues include glutamate 400, cysteine 507, histidine 510, and cysteine 530. Aspartate 534 is a binding site for Mn(2+).

The protein belongs to the arenaviridae nucleocapsid protein family. In terms of assembly, homomultimerizes to form the nucleocapsid. Binds to viral genomic RNA. Interacts with glycoprotein G2. Interacts with protein Z; this interaction probably directs the encapsidated genome to budding sites. Interacts with protein L; this interaction does not interfere with Z-L interaction. Interacts with host IKBKE (via Protein kinase domain); the interaction inhibits IKBKE kinase activity.

Its subcellular location is the virion. It localises to the host cytoplasm. Its function is as follows. Encapsidates the genome, protecting it from nucleases. The encapsidated genomic RNA is termed the nucleocapsid (NC). Serves as template for viral transcription and replication. The increased presence of protein N in host cell does not seem to trigger the switch from transcription to replication as observed in other negative strain RNA viruses. Through the interaction with host IKBKE, strongly inhibits the phosphorylation and nuclear translocation of host IRF3, a protein involved in interferon activation pathway, leading to the inhibition of interferon-beta and IRF3-dependent promoters activation. Also encodes a functional 3'-5' exoribonuclease that degrades preferentially dsRNA substrates and thereby participates in the suppression of interferon induction. This is Nucleoprotein from Praomys (African soft-furred rats).